Here is a 345-residue protein sequence, read N- to C-terminus: L-threonine 3-dehydrogenase (345 aa).

Cysteine 42 provides a ligand contact to Zn(2+). Active-site charge relay system residues include threonine 44 and histidine 47. The Zn(2+) site is built by histidine 67, glutamate 68, cysteine 97, cysteine 100, cysteine 103, and cysteine 111. Residues isoleucine 179, aspartate 199, arginine 204, 266-268 (LGI), and 290-291 (IY) contribute to the NAD(+) site.

The protein belongs to the zinc-containing alcohol dehydrogenase family. As to quaternary structure, homotetramer. Zn(2+) serves as cofactor.

Its subcellular location is the cytoplasm. The catalysed reaction is L-threonine + NAD(+) = (2S)-2-amino-3-oxobutanoate + NADH + H(+). It participates in amino-acid degradation; L-threonine degradation via oxydo-reductase pathway; glycine from L-threonine: step 1/2. Catalyzes the NAD(+)-dependent oxidation of L-threonine to 2-amino-3-ketobutyrate. The sequence is that of L-threonine 3-dehydrogenase from Rhizobium johnstonii (strain DSM 114642 / LMG 32736 / 3841) (Rhizobium leguminosarum bv. viciae).